Consider the following 337-residue polypeptide: Protein-arginine kinase (337 aa).

A Phosphagen kinase C-terminal domain is found at 12–240 (IVIASKVKIL…NKLILREKNQ (229 aa)). ATP-binding positions include 15-19 (ASKVK), 162-166 (RTKVF), and 193-198 (KSIYNS).

Belongs to the ATP:guanido phosphotransferase family.

It carries out the reaction L-arginyl-[protein] + ATP = N(omega)-phospho-L-arginyl-[protein] + ADP + H(+). Its function is as follows. Catalyzes the specific phosphorylation of arginine residues in proteins. In Clostridium perfringens (strain 13 / Type A), this protein is Protein-arginine kinase.